A 132-amino-acid polypeptide reads, in one-letter code: Small ribosomal subunit protein uS8 (132 aa).

It belongs to the universal ribosomal protein uS8 family. Part of the 30S ribosomal subunit. Contacts proteins S5 and S12.

In terms of biological role, one of the primary rRNA binding proteins, it binds directly to 16S rRNA central domain where it helps coordinate assembly of the platform of the 30S subunit. The sequence is that of Small ribosomal subunit protein uS8 from Ehrlichia chaffeensis (strain ATCC CRL-10679 / Arkansas).